Reading from the N-terminus, the 192-residue chain is Peptidyl-tRNA hydrolase (192 aa).

Tyr14 is a tRNA binding site. The active-site Proton acceptor is the His19. Positions 66 and 68 each coordinate tRNA.

Belongs to the PTH family. In terms of assembly, monomer.

It is found in the cytoplasm. It catalyses the reaction an N-acyl-L-alpha-aminoacyl-tRNA + H2O = an N-acyl-L-amino acid + a tRNA + H(+). In terms of biological role, hydrolyzes ribosome-free peptidyl-tRNAs (with 1 or more amino acids incorporated), which drop off the ribosome during protein synthesis, or as a result of ribosome stalling. Functionally, catalyzes the release of premature peptidyl moieties from peptidyl-tRNA molecules trapped in stalled 50S ribosomal subunits, and thus maintains levels of free tRNAs and 50S ribosomes. The chain is Peptidyl-tRNA hydrolase from Coprothermobacter proteolyticus (strain ATCC 35245 / DSM 5265 / OCM 4 / BT).